The following is a 299-amino-acid chain: UPF0276 protein ABO_1518 (299 aa).

The protein belongs to the UPF0276 family.

The protein is UPF0276 protein ABO_1518 of Alcanivorax borkumensis (strain ATCC 700651 / DSM 11573 / NCIMB 13689 / SK2).